Consider the following 835-residue polypeptide: MAAPILKDVVAYVEVWSSNGTENYSKTFTTQLVDMGAKVSKTFNKQVTHVIFKDGYQSTWDKAQKRGVKLVSVLWVEKCRTAGAHIDESLFPAANTNEHLPSLIKKKRKCMQPKDFNFKTPENDKRFQKKFEKMAKELQRQKTSLDDDVPILLFESNGSLIYTPTIEINSSHHSAMEKRLQEMKEKRENLSPTSSQLIQQSHDNPSNSLCEAPLNISRDTLCSDEYFAGGLHSSFDDLCGNSGCGNQERKLEGSINDIKSDVCISSLVSKANNIHSSPSFTHLDKSSPQKFLSNLSKEEINLQRNIAGKIVTPDQKQAAGMSQETFEEKYRLSPTLSSIKGHLLIHSRPRSSSVKRKRVSHGSHSPPKEKCKRKRSIRRSIMPRLQLCRSEGRLQHVAGPALKALSCGESSYDDYFSPDNLKERNSENLPPESQLPSSPAQFSCRSLSKKERTSIFEMSDFSCVGKKTRTVDITNFTAKTISSPQKTGNGEGRATSSCVTSAPEEALRCCRQAGKEDGCPEGNGFSYTIEDPALPKGHDGDLTALEGSLEEMKEAVGLKSTQNRGTTSKISNSSEGEAQSEHEPCFIVDCNMETSTEEKENLPGGYSGSVKNRPTRHDVLDDSCDGFKDLIKPHEEMKKSGRGKKPTRTLVMTSMPSEKQNVVIQVVDKLKGFSIAPDVCETTTHVLSGKPLRTLNVLLGIARGCWVLSYDWVLWSLELGHWISEEPFELSHHFPAAPLCRSECHLSAGPYRGTLFADQPVMFVSPASSPPVAKLCELVHLCGGRVSQVPRQASIVIGPYSGKKKATVKYLSEKWVLDSITQHKVCASENYLLSQ.

Residues 1–93 (MAAPILKDVV…AHIDESLFPA (93 aa)) enclose the BRCT 1 domain. Residues 184 to 206 (KEKRENLSPTSSQLIQQSHDNPS) form a disordered region. The segment covering 190 to 206 (LSPTSSQLIQQSHDNPS) has biased composition (polar residues). Ser279, Ser287, Ser296, and Ser333 each carry phosphoserine. Residue Thr335 is modified to Phosphothreonine. The segment covering 346-361 (HSRPRSSSVKRKRVSH) has biased composition (basic residues). Disordered regions lie at residues 346–376 (HSRP…RKRS) and 418–442 (PDNL…PAQF). Ser548 carries the phosphoserine modification. Residues 557–582 (GLKSTQNRGTTSKISNSSEGEAQSEH) form a disordered region. The span at 559 to 577 (KSTQNRGTTSKISNSSEGE) shows a compositional bias: polar residues. BRCT domains lie at 640-730 (SGRG…PFEL) and 751-833 (YRGT…NYLL).

In terms of assembly, interacts with CDC27 and maybe other components of the APC/C complex. Interacts with histone variant H2AX under DNA damage conditions.

The protein resides in the cytoplasm. The protein localises to the cytoskeleton. It is found in the microtubule organizing center. Its subcellular location is the centrosome. Its function is as follows. Implicated in chromosome condensation and DNA damage induced cellular responses. May play a role in neurogenesis and regulation of the size of the cerebral cortex. The chain is Microcephalin from Gorilla gorilla gorilla (Western lowland gorilla).